Reading from the N-terminus, the 411-residue chain is G2/mitotic-specific cyclin cig2 (411 aa).

The Destruction box signature appears at 51–60 (RTVLSDVSNV). Residues 57-89 (VSNVGKNNADEKDTKKAKRSFDESNLSTNEEAD) form a disordered region. Over residues 64-78 (NADEKDTKKAKRSFD) the composition is skewed to basic and acidic residues. The Cyclin N-terminal domain maps to 139-265 (EIFEYIRKLD…MLNVLNFDLS (127 aa)). The tract at residues 181 to 273 (SNFCLMPETL…LSYPSPLNFL (93 aa)) is interaction with pop1.

It belongs to the cyclin family. Cyclin AB subfamily. As to quaternary structure, associates with cdc2, res2 and rum1. Interacts with pop1 only when phosphorylated. In terms of processing, phosphorylated.

It localises to the nucleus. The protein localises to the cytoplasm. It is found in the cytoskeleton. Its subcellular location is the microtubule organizing center. The protein resides in the spindle pole body. In terms of biological role, essential for the control of the cell cycle at the G2/M and G1/S (mitosis) transition. Interacts with the cdc2 protein kinase to form MPF. Interaction with res2 promotes the phosphorylation of res1 and inhibits MBF-dependent gene transcription. Forms an autoregulating feedback-inhibition loop with MBF which is important for normal regulation of the cell cycle. G2/M cyclins accumulate steadily during G2 and are abruptly destroyed at mitosis. Negatively regulates conjugation via interacting with cell cycle 'start' genes. Degraded by skp1, pop1 and pop2 in the G2 and M phases of the cell cycle. The chain is G2/mitotic-specific cyclin cig2 (cig2) from Schizosaccharomyces pombe (strain 972 / ATCC 24843) (Fission yeast).